A 391-amino-acid chain; its full sequence is Probable sugar efflux transporter (391 aa).

12 consecutive transmembrane segments (helical) span residues 16 to 36 (VFVF…PVAL), 51 to 71 (VGLM…PLML), 82 to 102 (LLFL…AWNF), 103 to 123 (WVLL…WSIT), 138 to 158 (QALG…LPLG), 171 to 191 (FGVI…LLPP), 210 to 230 (PLLM…FTTY), 247 to 267 (ITTL…FLFG), 277 to 297 (FIAF…VFKN), 300 to 320 (WVIF…TIAL), 338 to 358 (IFSG…SIVI), and 361 to 381 (LGLG…LFWL).

It belongs to the major facilitator superfamily. SotB (TC 2.A.1.2) family.

The protein localises to the cell inner membrane. Involved in the efflux of sugars. The physiological role may be the reduction of the intracellular concentration of toxic sugars or sugar metabolites. This is Probable sugar efflux transporter from Helicobacter pylori (strain G27).